The sequence spans 346 residues: Small glutamine-rich tetratricopeptide repeat-containing protein 2 (346 aa).

4 TPR repeats span residues 102 to 135 (AEDL…LPTN), 136 to 169 (AIYY…DPSY), 170 to 203 (FRGY…EGDN), and 205 to 229 (TEAM…EKTV). Positions 219–249 (VEQSLNLEKTVPEQSRDADVDASQGASAGGL) are disordered. Over residues 228–237 (TVPEQSRDAD) the composition is skewed to basic and acidic residues. Thr-308 bears the Phosphothreonine mark. The interval 325 to 346 (GNLFGGAGAQSTDETPDNENKQ) is disordered.

It belongs to the SGT family. Interacts with HSC82, HSP104, MDY2, SSA1 and SSA2.

It localises to the cytoplasm. In terms of biological role, co-chaperone that binds to the molecular chaperone Hsp70 (SSA1 and SSA2). Regulates Hsp70 ATPase activity. Required for recovery from heat shock. The sequence is that of Small glutamine-rich tetratricopeptide repeat-containing protein 2 (SGT2) from Saccharomyces cerevisiae (strain ATCC 204508 / S288c) (Baker's yeast).